Reading from the N-terminus, the 82-residue chain is UPF0437 protein in nifX-nifW intergenic region (82 aa).

It belongs to the UPF0437 family.

In Frankia alni, this protein is UPF0437 protein in nifX-nifW intergenic region.